Consider the following 31-residue polypeptide: Morintide mO3 (31 aa).

A Chitin-binding type-1 domain is found at 1 to 30 (NRLCCSQYGFCGTTSEYCSRANGCQSNCWG). 2 cysteine pairs are disulfide-bonded: Cys-4–Cys-18 and Cys-24–Cys-28.

As to expression, seeds (at protein level).

Its function is as follows. Chitin-binding protein which functions in defense against chitin-containing fungal pathogens. In Moringa oleifera (Horseradish tree), this protein is Morintide mO3.